Here is a 174-residue protein sequence, read N- to C-terminus: Heat shock protein 22 (174 aa).

A sHSP domain is found at 44 to 154; it reads QIARWQEQEF…TLKEREVTIE (111 aa). A Phosphothreonine modification is found at Thr152. Positions 152-174 are disordered; that stretch reads TIEQTGEPAKKSAEEPNDKAASQ. Positions 159-174 are enriched in basic and acidic residues; that stretch reads PAKKSAEEPNDKAASQ.

Belongs to the small heat shock protein (HSP20) family.

This is Heat shock protein 22 (Hsp22) from Drosophila melanogaster (Fruit fly).